Here is a 236-residue protein sequence, read N- to C-terminus: 2,3,4,5-tetrahydropyridine-2,6-dicarboxylate N-acetyltransferase (236 aa).

Belongs to the transferase hexapeptide repeat family. DapH subfamily.

The catalysed reaction is (S)-2,3,4,5-tetrahydrodipicolinate + acetyl-CoA + H2O = L-2-acetamido-6-oxoheptanedioate + CoA. It functions in the pathway amino-acid biosynthesis; L-lysine biosynthesis via DAP pathway; LL-2,6-diaminopimelate from (S)-tetrahydrodipicolinate (acetylase route): step 1/3. In terms of biological role, catalyzes the transfer of an acetyl group from acetyl-CoA to tetrahydrodipicolinate. The polypeptide is 2,3,4,5-tetrahydropyridine-2,6-dicarboxylate N-acetyltransferase (Clostridium botulinum (strain Loch Maree / Type A3)).